The chain runs to 94 residues: Integration host factor subunit beta (94 aa).

The protein belongs to the bacterial histone-like protein family. In terms of assembly, heterodimer of an alpha and a beta chain.

Functionally, this protein is one of the two subunits of integration host factor, a specific DNA-binding protein that functions in genetic recombination as well as in transcriptional and translational control. The chain is Integration host factor subunit beta from Vibrio campbellii (strain ATCC BAA-1116).